A 364-amino-acid polypeptide reads, in one-letter code: Alanine racemase (364 aa).

The Proton acceptor; specific for D-alanine role is filled by lysine 35. Lysine 35 carries the N6-(pyridoxal phosphate)lysine modification. Position 131 (arginine 131) interacts with substrate. The Proton acceptor; specific for L-alanine role is filled by tyrosine 256. Methionine 304 provides a ligand contact to substrate.

It belongs to the alanine racemase family. The cofactor is pyridoxal 5'-phosphate.

It catalyses the reaction L-alanine = D-alanine. It functions in the pathway amino-acid biosynthesis; D-alanine biosynthesis; D-alanine from L-alanine: step 1/1. In terms of biological role, catalyzes the interconversion of L-alanine and D-alanine. May also act on other amino acids. The protein is Alanine racemase (alr) of Chromohalobacter salexigens (strain ATCC BAA-138 / DSM 3043 / CIP 106854 / NCIMB 13768 / 1H11).